Consider the following 375-residue polypeptide: Tyrosine--tRNA ligase (375 aa).

Y37, Y168, Q172, D175, and Q190 together coordinate L-tyrosine. A 'KMSKS' region motif is present at residues 251–255 (KMSKS). K254 provides a ligand contact to ATP.

This sequence belongs to the class-I aminoacyl-tRNA synthetase family. TyrS type 4 subfamily. As to quaternary structure, homodimer.

The protein resides in the cytoplasm. It carries out the reaction tRNA(Tyr) + L-tyrosine + ATP = L-tyrosyl-tRNA(Tyr) + AMP + diphosphate + H(+). In terms of biological role, catalyzes the attachment of tyrosine to tRNA(Tyr) in a two-step reaction: tyrosine is first activated by ATP to form Tyr-AMP and then transferred to the acceptor end of tRNA(Tyr). This is Tyrosine--tRNA ligase from Thermococcus sibiricus (strain DSM 12597 / MM 739).